Reading from the N-terminus, the 202-residue chain is Imidazoleglycerol-phosphate dehydratase (202 aa).

This sequence belongs to the imidazoleglycerol-phosphate dehydratase family. As to quaternary structure, homotrimer.

It catalyses the reaction D-erythro-1-(imidazol-4-yl)glycerol 3-phosphate = 3-(imidazol-4-yl)-2-oxopropyl phosphate + H2O. It functions in the pathway amino-acid biosynthesis; L-histidine biosynthesis; L-histidine from 5-phospho-alpha-D-ribose 1-diphosphate: step 6/9. The protein is Imidazoleglycerol-phosphate dehydratase (HIS3) of Cryptococcus neoformans var. neoformans serotype D (strain B-3501A) (Filobasidiella neoformans).